The chain runs to 376 residues: Carbamoyl phosphate synthase small chain (376 aa).

The interval 1-187 (MKALLVLEDG…AEDGSYAWRG (187 aa)) is CPSase. S45, G239, and G241 together coordinate L-glutamine. In terms of domain architecture, Glutamine amidotransferase type-1 spans 191–376 (PLLVYDFGIK…RKIIGESAGA (186 aa)). The Nucleophile role is filled by C266. L-glutamine-binding residues include L267, Q270, N308, G310, and F311. Active-site residues include H349 and E351.

The protein belongs to the CarA family. Composed of two chains; the small (or glutamine) chain promotes the hydrolysis of glutamine to ammonia, which is used by the large (or ammonia) chain to synthesize carbamoyl phosphate. Tetramer of heterodimers (alpha,beta)4.

The catalysed reaction is hydrogencarbonate + L-glutamine + 2 ATP + H2O = carbamoyl phosphate + L-glutamate + 2 ADP + phosphate + 2 H(+). It catalyses the reaction L-glutamine + H2O = L-glutamate + NH4(+). It participates in amino-acid biosynthesis; L-arginine biosynthesis; carbamoyl phosphate from bicarbonate: step 1/1. The protein operates within pyrimidine metabolism; UMP biosynthesis via de novo pathway; (S)-dihydroorotate from bicarbonate: step 1/3. Its function is as follows. Small subunit of the glutamine-dependent carbamoyl phosphate synthetase (CPSase). CPSase catalyzes the formation of carbamoyl phosphate from the ammonia moiety of glutamine, carbonate, and phosphate donated by ATP, constituting the first step of 2 biosynthetic pathways, one leading to arginine and/or urea and the other to pyrimidine nucleotides. The small subunit (glutamine amidotransferase) binds and cleaves glutamine to supply the large subunit with the substrate ammonia. In Desulfovibrio desulfuricans (strain ATCC 27774 / DSM 6949 / MB), this protein is Carbamoyl phosphate synthase small chain.